Reading from the N-terminus, the 1194-residue chain is DNA polymerase catalytic subunit (1194 aa).

The protein belongs to the DNA polymerase type-B family. Forms a complex with the ssDNA-binding protein, the DNA polymerase processivity factor, and the alkaline exonuclease. Interacts with the helicase-primase complex composed of the primase, the helicase and the primase-associated factor; this interaction may coordinate leading and lagging strand DNA synthesis at the replication fork.

It localises to the host nucleus. It carries out the reaction DNA(n) + a 2'-deoxyribonucleoside 5'-triphosphate = DNA(n+1) + diphosphate. It catalyses the reaction Endonucleolytic cleavage to 5'-phosphomonoester.. Functionally, replicates viral genomic DNA. The replication complex is composed of six viral proteins: the DNA polymerase, processivity factor, primase, primase-associated factor, helicase, and ssDNA-binding protein. Additionally, the polymerase contains an intrinsic ribonuclease H (RNase H) activity that specifically degrades RNA/DNA heteroduplexes or duplex DNA substrates in the 5' to 3' direction. Therefore, it can catalyze the excision of the RNA primers that initiate the synthesis of Okazaki fragments at a replication fork during viral DNA replication. This is DNA polymerase catalytic subunit from Varicella-zoster virus (strain Oka vaccine) (HHV-3).